The primary structure comprises 597 residues: DNA ligase (597 aa).

An ATP-binding site is contributed by Glu262. Lys264 functions as the N6-AMP-lysine intermediate in the catalytic mechanism. ATP is bound by residues Arg269, Arg284, Glu314, Phe354, Arg431, and Lys437.

The protein belongs to the ATP-dependent DNA ligase family. The cofactor is Mg(2+). Requires Mn(2+) as cofactor.

The catalysed reaction is ATP + (deoxyribonucleotide)n-3'-hydroxyl + 5'-phospho-(deoxyribonucleotide)m = (deoxyribonucleotide)n+m + AMP + diphosphate.. The enzyme catalyses ADP + (deoxyribonucleotide)n-3'-hydroxyl + 5'-phospho-(deoxyribonucleotide)m = (deoxyribonucleotide)n+m + AMP + phosphate.. It catalyses the reaction GTP + (deoxyribonucleotide)n-3'-hydroxyl + 5'-phospho-(deoxyribonucleotide)m = (deoxyribonucleotide)n+m + GMP + diphosphate.. With respect to regulation, inhibited by Ca(2+) and Zn(2+). Functionally, DNA ligase that seals nicks in double-stranded DNA during DNA replication, DNA recombination and DNA repair. Can use both ATP and ADP. In Staphylothermus marinus (strain ATCC 43588 / DSM 3639 / JCM 9404 / F1), this protein is DNA ligase.